The chain runs to 326 residues: Chitinase 12 (326 aa).

The N-terminal stretch at Met1–Ala21 is a signal peptide. Residues Glu22–Ala62 enclose the Chitin-binding type-1 domain. Cystine bridges form between Cys24/Cys39, Cys33/Cys45, Cys36/Cys65, Cys38/Cys52, Cys56/Cys60, Cys102/Cys165, Cys179/Cys187, and Cys286/Cys318. Glu147 serves as the catalytic Proton donor.

Belongs to the glycosyl hydrolase 19 family. Chitinase class I subfamily. Expressed in meristems and at lower levels in roots and sheaths.

It carries out the reaction Random endo-hydrolysis of N-acetyl-beta-D-glucosaminide (1-&gt;4)-beta-linkages in chitin and chitodextrins.. Its function is as follows. Hydrolyzes chitin and plays a role in defense against fungal pathogens containing chitin. Its overexpression confers enhanced resistance to sheath blight pathogen (R.solani). The chain is Chitinase 12 (Cht12) from Oryza sativa subsp. japonica (Rice).